Here is a 176-residue protein sequence, read N- to C-terminus: NAD(P)H-quinone oxidoreductase subunit 6, chloroplastic (176 aa).

Helical transmembrane passes span 10 to 30 (ILLV…VLLT), 32 to 52 (PIYS…FHIP), 61 to 81 (AQLL…VMFM), 107 to 127 (ILFS…IWTT), and 152 to 172 (FYLP…GAIA).

The protein belongs to the complex I subunit 6 family. In terms of assembly, NDH is composed of at least 16 different subunits, 5 of which are encoded in the nucleus.

It localises to the plastid. It is found in the chloroplast thylakoid membrane. The catalysed reaction is a plastoquinone + NADH + (n+1) H(+)(in) = a plastoquinol + NAD(+) + n H(+)(out). It carries out the reaction a plastoquinone + NADPH + (n+1) H(+)(in) = a plastoquinol + NADP(+) + n H(+)(out). Functionally, NDH shuttles electrons from NAD(P)H:plastoquinone, via FMN and iron-sulfur (Fe-S) centers, to quinones in the photosynthetic chain and possibly in a chloroplast respiratory chain. The immediate electron acceptor for the enzyme in this species is believed to be plastoquinone. Couples the redox reaction to proton translocation, and thus conserves the redox energy in a proton gradient. The sequence is that of NAD(P)H-quinone oxidoreductase subunit 6, chloroplastic (ndhG) from Calycanthus floridus var. glaucus (Eastern sweetshrub).